The following is a 157-amino-acid chain: Protein Smg homolog (157 aa).

This sequence belongs to the Smg family.

The sequence is that of Protein Smg homolog from Xylella fastidiosa (strain M23).